Here is a 3354-residue protein sequence, read N- to C-terminus: Cadherin-23 (3354 aa).

Positions 1–23 (MRYSLVTCYAVLWLLMLVPGSWG) are cleaved as a signal peptide. Over 24–3064 (QVNRLPFFTN…SVQLPDDMSA (3041 aa)) the chain is Extracellular. 27 consecutive Cadherin domains span residues 34–132 (HFFD…APTF), 133–236 (HNQP…DPIF), 237–348 (INLP…APEF), 349–460 (NSSE…RPIF), 461–561 (SQPL…VPTF), 562–671 (QKDA…PPTF), 672–784 (SKPA…APYY), 779–890 (KDAP…DPTF), 891–995 (RNLP…TPTF), 996–1102 (FPAV…RPIF), 1103–1208 (LQSS…APVF), 1210–1313 (QQQY…AVQF), 1314–1418 (SNAS…SPRF), 1420–1527 (FTSD…PPVI), 1529–1634 (SPFG…APVF), 1635–1744 (QQPH…VPTF), 1745–1851 (PRDY…DPVL), 1852–1959 (LNLP…HPLF), 1960–2069 (TEGT…WPTF), 2070–2174 (SPPT…RPEF), 2175–2293 (LNPI…TPQF), 2297–2402 (GITY…NPIF), 2403–2509 (DQPS…RPQF), 2510–2611 (SKPQ…RPVF), 2614–2722 (PPNG…EPLF), 2729–2846 (SPQY…PPRF), and 2847–2975 (TKAE…EEEF). N-linked (GlcNAc...) asparagine glycosylation is found at Asn-155 and Asn-206. N-linked (GlcNAc...) asparagine glycosylation is found at Asn-349, Asn-393, Asn-434, Asn-466, Asn-472, Asn-602, Asn-694, Asn-765, Asn-810, Asn-827, Asn-941, Asn-1001, Asn-1018, Asn-1171, Asn-1282, Asn-1315, Asn-1473, Asn-1534, Asn-1651, Asn-1667, Asn-1818, Asn-1857, Asn-1889, Asn-1902, Asn-2014, Asn-2050, Asn-2129, Asn-2168, Asn-2195, Asn-2263, Asn-2357, and Asn-2369. 8 N-linked (GlcNAc...) asparagine glycosylation sites follow: Asn-2578, Asn-2616, Asn-2749, Asn-2808, Asn-2877, Asn-2896, Asn-2941, and Asn-2981. The chain crosses the membrane as a helical span at residues 3065–3085 (LQMAIIVLAILLFLAAMLFVL). The Cytoplasmic portion of the chain corresponds to 3086–3354 (MNWYYRTIHK…MESPLEITEL (269 aa)).

In terms of assembly, interacts with USH1C and USH1G. antiparallel heterodimer with PCDH15. Isoform C1: Interacts with CAMSAP3; leading to inhibit CAMSAP3 ability to induce microtubule bundle formation. In terms of tissue distribution, in adult animals relatively high levels of expression are found in testis, skeletal muscle, heart, eye and thymus, and lower expression in kidney, lung and brain. Found in the sensory hair cells of the inner ear.

The protein resides in the cell membrane. In terms of biological role, cadherins are calcium-dependent cell adhesion proteins. They preferentially interact with themselves in a homophilic manner in connecting cells. CDH23 is required for establishing and/or maintaining the proper organization of the stereocilia bundle of hair cells in the cochlea and the vestibule during late embryonic/early postnatal development. It is part of the functional network formed by USH1C, USH1G, CDH23 and MYO7A that mediates mechanotransduction in cochlear hair cells. Required for normal hearing. The polypeptide is Cadherin-23 (Cdh23) (Mus musculus (Mouse)).